Consider the following 278-residue polypeptide: NAD kinase (278 aa).

Catalysis depends on D56, which acts as the Proton acceptor. Residues 56 to 57 (DG), 132 to 133 (NE), R158, D160, and 171 to 176 (TAYNKS) contribute to the NAD(+) site.

This sequence belongs to the NAD kinase family. Requires a divalent metal cation as cofactor.

It localises to the cytoplasm. The catalysed reaction is NAD(+) + ATP = ADP + NADP(+) + H(+). In terms of biological role, involved in the regulation of the intracellular balance of NAD and NADP, and is a key enzyme in the biosynthesis of NADP. Catalyzes specifically the phosphorylation on 2'-hydroxyl of the adenosine moiety of NAD to yield NADP. The polypeptide is NAD kinase (Streptococcus pyogenes serotype M1).